A 518-amino-acid chain; its full sequence is Cytochrome P450 82E3 (518 aa).

The chain crosses the membrane as a helical span at residues 2–22 (VFPVEAIVGLVTFTFLFYFLW). A Glycyl lysine isopeptide (Lys-Gly) (interchain with G-Cter in ubiquitin) cross-link involves residue K254. Position 458 (C458) interacts with heme.

The protein belongs to the cytochrome P450 family. CYP82E2 subfamily. Heme serves as cofactor. As to expression, expressed at low levels in green leaves.

Its subcellular location is the membrane. Its pathway is alkaloid biosynthesis; nicotine biosynthesis. In terms of biological role, no nicotine N-demethylase activity. This is Cytochrome P450 82E3 from Nicotiana tabacum (Common tobacco).